Here is a 134-residue protein sequence, read N- to C-terminus: Holo-[acyl-carrier-protein] synthase (134 aa).

Mg(2+) is bound by residues aspartate 8 and glutamate 56.

The protein belongs to the P-Pant transferase superfamily. AcpS family. The cofactor is Mg(2+).

It is found in the cytoplasm. It catalyses the reaction apo-[ACP] + CoA = holo-[ACP] + adenosine 3',5'-bisphosphate + H(+). Its function is as follows. Transfers the 4'-phosphopantetheine moiety from coenzyme A to a Ser of acyl-carrier-protein. The chain is Holo-[acyl-carrier-protein] synthase from Clostridium kluyveri (strain ATCC 8527 / DSM 555 / NBRC 12016 / NCIMB 10680 / K1).